The sequence spans 76 residues: Small ribosomal subunit protein bS18 (76 aa).

The protein belongs to the bacterial ribosomal protein bS18 family. Part of the 30S ribosomal subunit. Forms a tight heterodimer with protein bS6.

Its function is as follows. Binds as a heterodimer with protein bS6 to the central domain of the 16S rRNA, where it helps stabilize the platform of the 30S subunit. The polypeptide is Small ribosomal subunit protein bS18 (Tolumonas auensis (strain DSM 9187 / NBRC 110442 / TA 4)).